Reading from the N-terminus, the 543-residue chain is Chaperonin GroEL (543 aa).

ATP-binding positions include 29–32, 86–90, Gly413, 478–480, and Asp494; these read TLGP, DGTTT, and NAA.

This sequence belongs to the chaperonin (HSP60) family. In terms of assembly, forms a cylinder of 14 subunits composed of two heptameric rings stacked back-to-back. Interacts with the co-chaperonin GroES.

It localises to the cytoplasm. It catalyses the reaction ATP + H2O + a folded polypeptide = ADP + phosphate + an unfolded polypeptide.. Together with its co-chaperonin GroES, plays an essential role in assisting protein folding. The GroEL-GroES system forms a nano-cage that allows encapsulation of the non-native substrate proteins and provides a physical environment optimized to promote and accelerate protein folding. This Lactobacillus gasseri (strain ATCC 33323 / DSM 20243 / BCRC 14619 / CIP 102991 / JCM 1131 / KCTC 3163 / NCIMB 11718 / NCTC 13722 / AM63) protein is Chaperonin GroEL.